Here is a 568-residue protein sequence, read N- to C-terminus: T-complex protein 1 subunit theta (568 aa).

K15 is covalently cross-linked (Glycyl lysine isopeptide (Lys-Gly) (interchain with G-Cter in ubiquitin)). A Phosphoserine modification is found at S505.

Belongs to the TCP-1 chaperonin family. In terms of assembly, heterooligomeric complex of about 850 to 900 kDa that forms two stacked rings, 12 to 16 nm in diameter.

It localises to the cytoplasm. Functionally, molecular chaperone; assists the folding of proteins upon ATP hydrolysis. Known to play a role, in vitro, in the folding of actin and tubulin. In yeast may play a role in mitotic spindle formation. The polypeptide is T-complex protein 1 subunit theta (CCT8) (Saccharomyces cerevisiae (strain ATCC 204508 / S288c) (Baker's yeast)).